We begin with the raw amino-acid sequence, 251 residues long: tRNA (guanine-N(7)-)-methyltransferase (251 aa).

S-adenosyl-L-methionine-binding positions include Gly-71, 94-95 (EL), 128-129 (NS), and Leu-148. The active site involves Asp-151. 226–228 (TEE) lines the S-adenosyl-L-methionine pocket.

Belongs to the class I-like SAM-binding methyltransferase superfamily. TrmB family.

It is found in the nucleus. It catalyses the reaction guanosine(46) in tRNA + S-adenosyl-L-methionine = N(7)-methylguanosine(46) in tRNA + S-adenosyl-L-homocysteine. It functions in the pathway tRNA modification; N(7)-methylguanine-tRNA biosynthesis. Functionally, catalyzes the formation of N(7)-methylguanine at position 46 (m7G46) in tRNA. The sequence is that of tRNA (guanine-N(7)-)-methyltransferase from Arabidopsis thaliana (Mouse-ear cress).